A 160-amino-acid chain; its full sequence is Ribonuclease P protein component 2 (160 aa).

The protein belongs to the eukaryotic/archaeal RNase P protein component 2 family. In terms of assembly, consists of a catalytic RNA component and at least 4-5 protein subunits.

The protein localises to the cytoplasm. It catalyses the reaction Endonucleolytic cleavage of RNA, removing 5'-extranucleotides from tRNA precursor.. Functionally, part of ribonuclease P, a protein complex that generates mature tRNA molecules by cleaving their 5'-ends. This is Ribonuclease P protein component 2 from Methanosphaerula palustris (strain ATCC BAA-1556 / DSM 19958 / E1-9c).